Reading from the N-terminus, the 322-residue chain is uncharacterized protein (322 aa).

Residues 299 to 319 (GLLLEGTIVALILLEIILALA) traverse the membrane as a helical segment.

It is found in the membrane. This is an uncharacterized protein from Methanocaldococcus jannaschii (strain ATCC 43067 / DSM 2661 / JAL-1 / JCM 10045 / NBRC 100440) (Methanococcus jannaschii).